Reading from the N-terminus, the 158-residue chain is S-ribosylhomocysteine lyase (158 aa).

3 residues coordinate Fe cation: His-54, His-58, and Cys-125.

The protein belongs to the LuxS family. In terms of assembly, homodimer. Fe cation serves as cofactor.

The enzyme catalyses S-(5-deoxy-D-ribos-5-yl)-L-homocysteine = (S)-4,5-dihydroxypentane-2,3-dione + L-homocysteine. Involved in the synthesis of autoinducer 2 (AI-2) which is secreted by bacteria and is used to communicate both the cell density and the metabolic potential of the environment. The regulation of gene expression in response to changes in cell density is called quorum sensing. Catalyzes the transformation of S-ribosylhomocysteine (RHC) to homocysteine (HC) and 4,5-dihydroxy-2,3-pentadione (DPD). This chain is S-ribosylhomocysteine lyase, found in Lactococcus lactis subsp. cremoris (strain MG1363).